A 318-amino-acid chain; its full sequence is Nucleotide-binding protein Jann_0539 (318 aa).

Residue 17 to 24 participates in ATP binding; it reads GPSGAGRS. 64–67 is a GTP binding site; it reads DPRT. Residues 278–318 are disordered; sequence GWQVSKRHRDVDKDASENSDRDRGASARTAASTDDGEAEQP. Basic and acidic residues predominate over residues 286–302; the sequence is RDVDKDASENSDRDRGA.

Belongs to the RapZ-like family.

Its function is as follows. Displays ATPase and GTPase activities. The chain is Nucleotide-binding protein Jann_0539 from Jannaschia sp. (strain CCS1).